A 185-amino-acid polypeptide reads, in one-letter code: Ribosome-recycling factor (185 aa).

The protein belongs to the RRF family.

It is found in the cytoplasm. Responsible for the release of ribosomes from messenger RNA at the termination of protein biosynthesis. May increase the efficiency of translation by recycling ribosomes from one round of translation to another. This Pseudoalteromonas atlantica (strain T6c / ATCC BAA-1087) protein is Ribosome-recycling factor.